The primary structure comprises 622 residues: Matrilin-4 (622 aa).

Positions 1 to 18 are cleaved as a signal peptide; the sequence is MRGLLCWPVLLLLLQPWE. The VWFA 1 domain occupies 34-213; that stretch reads DLVFVIDSSR…EFGLQFQSRL (180 aa). An N-linked (GlcNAc...) asparagine glycan is attached at asparagine 69. The EGF-like 1; incomplete domain occupies 215 to 255; the sequence is GKDQCAEGGHGCQHQCVNAWAMFHCTCNPGYKLAADNKSCL. Intrachain disulfides connect cysteine 219-cysteine 230, cysteine 226-cysteine 239, cysteine 241-cysteine 254, cysteine 260-cysteine 271, cysteine 267-cysteine 280, cysteine 282-cysteine 295, cysteine 301-cysteine 312, cysteine 308-cysteine 321, cysteine 323-cysteine 336, cysteine 342-cysteine 353, cysteine 349-cysteine 362, and cysteine 364-cysteine 377. An N-linked (GlcNAc...) asparagine glycan is attached at asparagine 251. 3 consecutive EGF-like domains span residues 256–292, 297–337, and 342–377; these read AIDLCAEGTHGCEHHCVNSPGSYFCHCQVGFVLQQDQ, AIDY…RSCQ, and CNGVDHGCEFQCVSEGLSYRCLCPEGRQLQADGKSC. Asparagine 305 carries an N-linked (GlcNAc...) asparagine glycan. The VWFA 2 domain maps to 386–561; that stretch reads DLVLLVDGSK…GTMTHLLENL (176 aa). Residues 591–622 adopt a coiled-coil conformation; sequence GRTLGALESLTLNLAQLTARLEDLENQLANQK.

Interacts with COMP. Embryonic kidney, lung and placenta.

Its subcellular location is the secreted. In terms of biological role, major component of the extracellular matrix of cartilage. The chain is Matrilin-4 (MATN4) from Homo sapiens (Human).